Reading from the N-terminus, the 303-residue chain is Acetylglutamate kinase (303 aa).

Residues 69–70 (GG), arginine 91, and asparagine 190 contribute to the substrate site.

This sequence belongs to the acetylglutamate kinase family. ArgB subfamily.

It is found in the cytoplasm. It catalyses the reaction N-acetyl-L-glutamate + ATP = N-acetyl-L-glutamyl 5-phosphate + ADP. It participates in amino-acid biosynthesis; L-arginine biosynthesis; N(2)-acetyl-L-ornithine from L-glutamate: step 2/4. Its function is as follows. Catalyzes the ATP-dependent phosphorylation of N-acetyl-L-glutamate. This chain is Acetylglutamate kinase, found in Nocardia farcinica (strain IFM 10152).